The primary structure comprises 490 residues: N-succinylglutamate 5-semialdehyde dehydrogenase (490 aa).

Gly220 to Gly225 is an NAD(+) binding site. Residues Glu243 and Cys277 contribute to the active site.

It belongs to the aldehyde dehydrogenase family. AstD subfamily.

It carries out the reaction N-succinyl-L-glutamate 5-semialdehyde + NAD(+) + H2O = N-succinyl-L-glutamate + NADH + 2 H(+). The protein operates within amino-acid degradation; L-arginine degradation via AST pathway; L-glutamate and succinate from L-arginine: step 4/5. Its function is as follows. Catalyzes the NAD-dependent reduction of succinylglutamate semialdehyde into succinylglutamate. This is N-succinylglutamate 5-semialdehyde dehydrogenase from Shigella dysenteriae serotype 1 (strain Sd197).